A 92-amino-acid chain; its full sequence is Small ribosomal subunit protein uS17 (92 aa).

It belongs to the universal ribosomal protein uS17 family. As to quaternary structure, part of the 30S ribosomal subunit.

Functionally, one of the primary rRNA binding proteins, it binds specifically to the 5'-end of 16S ribosomal RNA. The chain is Small ribosomal subunit protein uS17 from Corynebacterium glutamicum (strain ATCC 13032 / DSM 20300 / JCM 1318 / BCRC 11384 / CCUG 27702 / LMG 3730 / NBRC 12168 / NCIMB 10025 / NRRL B-2784 / 534).